A 484-amino-acid chain; its full sequence is tRNA sulfurtransferase (484 aa).

A THUMP domain is found at 63–167 (KEMGERLTCM…DKRLFVIHSQ (105 aa)). ATP contacts are provided by residues 185–186 (LM), K267, G289, and Q298. C346 and C457 are oxidised to a cystine. Positions 405–483 (ALAGQIVIDI…GHANVRVYRP (79 aa)) constitute a Rhodanese domain. The Cysteine persulfide intermediate role is filled by C457.

Belongs to the ThiI family.

The protein localises to the cytoplasm. It carries out the reaction [ThiI sulfur-carrier protein]-S-sulfanyl-L-cysteine + a uridine in tRNA + 2 reduced [2Fe-2S]-[ferredoxin] + ATP + H(+) = [ThiI sulfur-carrier protein]-L-cysteine + a 4-thiouridine in tRNA + 2 oxidized [2Fe-2S]-[ferredoxin] + AMP + diphosphate. The catalysed reaction is [ThiS sulfur-carrier protein]-C-terminal Gly-Gly-AMP + S-sulfanyl-L-cysteinyl-[cysteine desulfurase] + AH2 = [ThiS sulfur-carrier protein]-C-terminal-Gly-aminoethanethioate + L-cysteinyl-[cysteine desulfurase] + A + AMP + 2 H(+). It functions in the pathway cofactor biosynthesis; thiamine diphosphate biosynthesis. Catalyzes the ATP-dependent transfer of a sulfur to tRNA to produce 4-thiouridine in position 8 of tRNAs, which functions as a near-UV photosensor. Also catalyzes the transfer of sulfur to the sulfur carrier protein ThiS, forming ThiS-thiocarboxylate. This is a step in the synthesis of thiazole, in the thiamine biosynthesis pathway. The sulfur is donated as persulfide by IscS. The protein is tRNA sulfurtransferase of Pseudomonas fluorescens (strain Pf0-1).